The chain runs to 533 residues: Lysine--tRNA ligase 1 (533 aa).

Residues 26–34 (PSGHIHIGN) carry the 'HIGH' region motif. The 'KMSKS' region signature appears at 272-276 (AMSSS).

This sequence belongs to the class-I aminoacyl-tRNA synthetase family.

The protein localises to the cytoplasm. It carries out the reaction tRNA(Lys) + L-lysine + ATP = L-lysyl-tRNA(Lys) + AMP + diphosphate. The sequence is that of Lysine--tRNA ligase 1 from Methanosarcina acetivorans (strain ATCC 35395 / DSM 2834 / JCM 12185 / C2A).